Consider the following 472-residue polypeptide: uncharacterized protein (472 aa).

14 helical membrane passes run 14-34 (VIVGILLAGAFVAILNQTLLI), 53-73 (WLTTSFMLTNGILIPITAFLI), 80-100 (ALLITAMSIFTAGTVVGAFAP), 113-133 (AAGAGIMMPLMQTVFLTIFPI), 142-162 (MVGLVISFAPAIGPTLSGWAV), 169-189 (SLFYIILPFAVIDLILASILM), 202-222 (ILSVILSTFGFGGLLYGFSSV), 227-247 (WSSSTVLISLLVGVIALLLFI), 263-283 (FTFGVFSLTTLLGTLVFALLI), 302-322 (FDTGLMLLPGAVVMGFMSPII), 333-353 (GLAIAGFCIIFLTSLPFMQLT), 359-379 (AWIVVLYTVRLLGTAMIMMPV), 405-427 (VGGSIGTALLVSVMSNQAAHAGT), and 437-457 (GMNAAFIVAAVIALVGFLLSF).

Belongs to the major facilitator superfamily. EmrB family.

It is found in the cell membrane. This is an uncharacterized protein from Bacillus subtilis (strain 168).